We begin with the raw amino-acid sequence, 112 residues long: Putative pterin-4-alpha-carbinolamine dehydratase (112 aa).

The protein belongs to the pterin-4-alpha-carbinolamine dehydratase family.

The catalysed reaction is (4aS,6R)-4a-hydroxy-L-erythro-5,6,7,8-tetrahydrobiopterin = (6R)-L-erythro-6,7-dihydrobiopterin + H2O. This is Putative pterin-4-alpha-carbinolamine dehydratase from Shewanella oneidensis (strain ATCC 700550 / JCM 31522 / CIP 106686 / LMG 19005 / NCIMB 14063 / MR-1).